Consider the following 207-residue polypeptide: ATP-dependent Clp protease proteolytic subunit 1 (207 aa).

Catalysis depends on Ser103, which acts as the Nucleophile. His128 is an active-site residue.

The protein belongs to the peptidase S14 family. In terms of assembly, fourteen ClpP subunits assemble into 2 heptameric rings which stack back to back to give a disk-like structure with a central cavity, resembling the structure of eukaryotic proteasomes.

It is found in the cytoplasm. The catalysed reaction is Hydrolysis of proteins to small peptides in the presence of ATP and magnesium. alpha-casein is the usual test substrate. In the absence of ATP, only oligopeptides shorter than five residues are hydrolyzed (such as succinyl-Leu-Tyr-|-NHMec, and Leu-Tyr-Leu-|-Tyr-Trp, in which cleavage of the -Tyr-|-Leu- and -Tyr-|-Trp bonds also occurs).. Functionally, cleaves peptides in various proteins in a process that requires ATP hydrolysis. Has a chymotrypsin-like activity. Plays a major role in the degradation of misfolded proteins. The protein is ATP-dependent Clp protease proteolytic subunit 1 of Tropheryma whipplei (strain Twist) (Whipple's bacillus).